A 631-amino-acid polypeptide reads, in one-letter code: MAQTSSSSSSTFEHLWSSLEPDSTYFDLPQPSQGTSEASGSEESNMDVFHLQGMAQFNLLSSAMDQMGSRAAPASPYTPEHAASAPTHSPYAQPSSTFDTMSPAPVIPSNTDYPGPHHFEVTFQQSSTAKSATWTYSPLLKKLYCQIAKTCPIQIKVSTPPPPGTAIRAMPVYKKAEHVTDIVKRCPNHELGRDFNEGQSAPASHLIRVEGNNLAQYVDDPVTGRQSVVVPYEPPQVGTEFTTILYNFMCNSSCVGGMNRRPILVIITLETRDGQVLGRRSFEGRICACPGRDRKADEDHYREQQALNESTTKNGAASKRAFKQSPPAIPALGTNVKKRRHGDEDMFYMHVRGRENFEILMKVKESLELMELVPQPLVDSYRQQQQQQLLQRPSHLQPPSYGPVLSPMNKVHGGVNKLPSVNQLVGQPPPHSSAAGPNLGPMGSGMLNSHGHSMPANGEMNGGHSSQTMVSGSHCTPPPPYHADPSLVSFLTGLGCPNCIECFTSQGLQSIYHLQNLTIEDLGALKVPDQYRMTIWRGLQDLKQSHDCGQQLLRSSSNAATISIGGSGELQRQRVMEAVHFRVRHTITIPNRGGAGAVTGPDEWADFGFDLPDCKSRKQPIKEEFTETESH.

The interval 1 to 43 is transactivation; the sequence is MAQTSSSSSSTFEHLWSSLEPDSTYFDLPQPSQGTSEASGSEE. Disordered regions lie at residues 23 to 43 and 69 to 113; these read STYF…GSEE and SRAA…NTDY. The residue at position 24 (threonine 24) is a Phosphothreonine; by PLK1. Tyrosine 25 is subject to Phosphotyrosine; by SRC and HCK. 2 stretches are compositionally biased toward polar residues: residues 30 to 43 and 86 to 100; these read QPSQ…GSEE and PTHS…TFDT. Phosphotyrosine; by ABL1 is present on tyrosine 91. Residues 123–302 form a DNA-binding region; the sequence is FQQSSTAKSA…DRKADEDHYR (180 aa). 4 residues coordinate Zn(2+): cysteine 186, histidine 189, cysteine 250, and cysteine 254. Over residues 306–315 the composition is skewed to polar residues; that stretch reads ALNESTTKNG. The segment at 306–334 is disordered; the sequence is ALNESTTKNGAASKRAFKQSPPAIPALGT. Positions 337-372 are interaction with HIPK2; sequence KKRRHGDEDMFYMHVRGRENFEILMKVKESLELMEL. An oligomerization region spans residues 337–378; it reads KKRRHGDEDMFYMHVRGRENFEILMKVKESLELMELVPQPLV. The PPxY motif motif lies at 477–481; that stretch reads PPPPY. The region spanning 479-545 is the SAM domain; it reads PPYHADPSLV…WRGLQDLKQS (67 aa). Lysine 622 participates in a covalent cross-link: Glycyl lysine isopeptide (Lys-Gly) (interchain with G-Cter in SUMO); alternate. A Glycyl lysine isopeptide (Lys-Gly) (interchain with G-Cter in SUMO2); alternate cross-link involves residue lysine 622.

This sequence belongs to the p53 family. As to quaternary structure, found in a complex with p53/TP53 and CABLES1. The C-terminal oligomerization domain binds to the ABL1 tyrosine kinase SH3 domain. Interacts with HECW2, HIPK2, RANBP9 and WWOX. Interacts (via SAM domain) with FBXO45 (via B30.2/SPRY domain). Interacts with YAP1 (phosphorylated form). Interacts with HCK (via SH3 domain); this inhibits TP73 activity and degradation. Interacts (via SAM domain) with NQO1; this interaction is NADH-dependent, stabilizes TP73 in response to oxidative stress and protects it from ubiquitin-independent degradation by the 20S proteasome. It depends on Zn(2+) as a cofactor. In terms of processing, sumoylated on Lys-622, which potentiates proteasomal degradation but does not affect transcriptional activity. Phosphorylation by PLK1 and PLK3 inhibits the transcription regulator activity and pro-apoptotic function. Higher levels of phosphorylation seen in striatal neurons of. mutant huntingtin (htt) transgenic mice. Post-translationally, polyubiquitinated by RCHY1/PIRH2; leading to its degradation by the proteasome. As to expression, found in striatal neurons of mutant huntingtin (htt) transgenic mice (at protein level). Isoform 1 is expressed in the nasal epithelium, the vomeronasal organ, the hippocampus and the hypothalamus.

It is found in the nucleus. The protein localises to the cytoplasm. Participates in the apoptotic response to DNA damage. Isoforms containing the transactivation domain are pro-apoptotic, isoforms lacking the domain are anti-apoptotic and block the function of p53 and transactivating p73 isoforms. May be a tumor suppressor protein. Is an activator of FOXJ1 expression, essential for the positive regulation of lung ciliated cell differentiation. This is Tumor protein p73 (Tp73) from Mus musculus (Mouse).